The chain runs to 917 residues: DNA topoisomerase 1 beta (917 aa).

The segment at 1–368 is disordered; sequence MATEAFVKPV…SLPSGDGQKK (368 aa). Over residues 32–63 the composition is skewed to polar residues; the sequence is RNSNTAATTNRPSPINNAMRNSAIGSTKSSPP. Over residues 66–82 the composition is skewed to low complexity; it reads SPLTSPNRSASSSTRSS. Polar residues predominate over residues 89 to 100; it reads PSSSSVQRSTLK. Composition is skewed to basic and acidic residues over residues 102-116 and 134-149; these read PLRD…ERNG and DKPL…KEVT. The segment covering 150 to 170 has biased composition (polar residues); sequence KQPSSSGRGSTQQAVQKSNMR. The segment covering 177 to 187 has biased composition (basic and acidic residues); that stretch reads YTKKKVLDERA. Positions 189–205 are enriched in polar residues; the sequence is MSSTVQTKTSVGTSSSK. Basic and acidic residues-rich tracts occupy residues 256-265 and 296-307; these read KLSEPARPVK and VKEDNSDGDDHV. Residue Ser-301 is modified to Phosphoserine. Residues 316 to 338 are compositionally biased toward low complexity; sequence DSSNNKSSSAKPSSSKMIASSSR. 3 interaction with DNA regions span residues 575 to 576, 638 to 643, and 729 to 731; these read KY, RAGNEK, and TAK. In terms of domain architecture, Topo IB-type catalytic spans 582-912; that stretch reads SSSLKGQSDK…MDVDPEFRFC (331 aa). Positions 779–858 form a coiled coil; that stretch reads VSKSHGAQVE…ERDMQTKEDM (80 aa). The O-(3'-phospho-DNA)-tyrosine intermediate role is filled by Tyr-870.

It belongs to the type IB topoisomerase family.

The protein localises to the nucleus. The enzyme catalyses ATP-independent breakage of single-stranded DNA, followed by passage and rejoining.. Its function is as follows. Releases the supercoiling and torsional tension of DNA introduced during the DNA replication and transcription by transiently cleaving and rejoining one strand of the DNA duplex. Introduces a single-strand break via transesterification at a target site in duplex DNA. The scissile phosphodiester is attacked by the catalytic tyrosine of the enzyme, resulting in the formation of a DNA-(3'-phosphotyrosyl)-enzyme intermediate and the expulsion of a 5'-OH DNA strand. The free DNA strand then rotates around the intact phosphodiester bond on the opposing strand, thus removing DNA supercoils. Finally, in the religation step, the DNA 5'-OH attacks the covalent intermediate to expel the active-site tyrosine and restore the DNA phosphodiester backbone. Topoisomerases 1 enzymes (TOP1A and TOP1B) are essential for plant survival. This chain is DNA topoisomerase 1 beta, found in Arabidopsis thaliana (Mouse-ear cress).